The sequence spans 106 residues: uncharacterized protein (106 aa).

This is an uncharacterized protein from Bacillus subtilis (strain 168).